Here is a 942-residue protein sequence, read N- to C-terminus: Mitogen-activated protein kinase kinase kinase 14 (942 aa).

A compositionally biased stretch (basic residues) spans 136-152 (GKRHGKARKKRRKKRSK). 2 disordered regions span residues 136–156 (GKRH…SLAQ) and 291–326 (VSGQ…SCPS). Positions 402 to 657 (MTHQPRVGRG…ELRRKVGKAL (256 aa)) constitute a Protein kinase domain. Residues 403-655 (THQPRVGRGS…AMELRRKVGK (253 aa)) are interaction with ZFP91. Residues 408 to 416 (VGRGSFGEV) and Lys431 contribute to the ATP site. The Proton acceptor role is filled by Asp517. A Phosphothreonine modification is found at Thr561. Disordered stretches follow at residues 660 to 756 (VGGL…FPDR) and 801 to 823 (SDDS…SSGV). Positions 707 to 720 (EPQPPLPPEPPEPS) are enriched in pro residues. A compositionally biased stretch (polar residues) spans 809-823 (SKASQSSRDTLSSGV).

The protein belongs to the protein kinase superfamily. STE Ser/Thr protein kinase family. MAP kinase kinase kinase subfamily. In terms of assembly, interacts with TRAF2, TRAF3, TRAF5, TRAF6, IKKA and NF-kappa-B2/P100. Interacts with PELI3. Interacts with NIBP; the interaction is direct. Interacts with ARRB1 and ARRB2. Interacts with GRB10. Interacts with ZFP91. Interacts with NLRP12; this interaction promotes proteasomal degradation of MAP3K14. Directly interacts with DDX3X. Interacts (via C-terminus and kinase domain) with PPPC3A (via N-terminus) and PPP3CB. In terms of processing, phosphorylation at Thr-561 is required to activate its kinase activity and 'Lys-63'-linked polyubiquitination. Phosphorylated by CHUK/IKKA leading to MAP3K14 destabilization. Autophosphorylated. Ubiquitinated. Undergoes both 'Lys-48'- and 'Lys-63'-linked polyubiquitination. 'Lys-48'-linked polyubiquitination leads to its degradation by the proteasome, while 'Lys-63'-linked polyubiquitination stabilizes and activates it.

It localises to the cytoplasm. The enzyme catalyses L-seryl-[protein] + ATP = O-phospho-L-seryl-[protein] + ADP + H(+). It carries out the reaction L-threonyl-[protein] + ATP = O-phospho-L-threonyl-[protein] + ADP + H(+). Functionally, lymphotoxin beta-activated kinase which seems to be exclusively involved in the activation of NF-kappa-B and its transcriptional activity. Phosphorylates CHUK/IKKA. Promotes proteolytic processing of NFKB2/P100, which leads to activation of NF-kappa-B via the non-canonical pathway. Has an essential role in the non-canonical NF-kappa-B signalining that regulates genes encoding molecules involved in B-cell survival, lymphoid organogenesis, and immune response. Could act in a receptor-selective manner. This is Mitogen-activated protein kinase kinase kinase 14 from Mus musculus (Mouse).